Here is a 111-residue protein sequence, read N- to C-terminus: Nucleoid-associated protein NMC1380 (111 aa).

This sequence belongs to the YbaB/EbfC family. As to quaternary structure, homodimer.

The protein resides in the cytoplasm. It is found in the nucleoid. Functionally, binds to DNA and alters its conformation. May be involved in regulation of gene expression, nucleoid organization and DNA protection. In Neisseria meningitidis serogroup C / serotype 2a (strain ATCC 700532 / DSM 15464 / FAM18), this protein is Nucleoid-associated protein NMC1380.